A 551-amino-acid chain; its full sequence is Sialic acid-binding Ig-like lectin 5 (551 aa).

The first 16 residues, 1-16, serve as a signal peptide directing secretion; that stretch reads MLPLLLLPLLWGGSLQ. Topologically, residues 17–441 are extracellular; it reads EKPVYELQVQ…LGTGVVPAAL (425 aa). The 118-residue stretch at 19-136 folds into the Ig-like V-type domain; it reads PVYELQVQKS…KYSYQQNKLN (118 aa). Intrachain disulfides connect Cys-36-Cys-170, Cys-41-Cys-101, and Cys-164-Cys-213. Asn-100 carries an N-linked (GlcNAc...) asparagine glycan. Positions 119, 127, and 129 each coordinate N-acetylneuraminate. In terms of domain architecture, Ig-like C2-type 1 spans 146–229; that stretch reads PDIHFLEPLE…AQVTTERTVQ (84 aa). Residues 189–210 are disordered; sequence DPETTRSSELTLTPRPEDHGTN. 3 N-linked (GlcNAc...) asparagine glycosylation sites follow: Asn-210, Asn-231, and Asn-253. The Ig-like C2-type 2 domain occupies 236–330; it reads PQTITIFRNG…GFLQIFLNLS (95 aa). A disulfide bond links Cys-269 and Cys-314. Residues Asn-328, Asn-375, Asn-384, and Asn-393 are each glycosylated (N-linked (GlcNAc...) asparagine). Residues 442 to 462 traverse the membrane as a helical segment; it reads GGAGVMALLCICLCLIFFLIV. Residues 463–551 are Cytoplasmic-facing; sequence KARRKQAAGR…TEYSEIKTSK (89 aa). The interval 469–551 is disordered; it reads AAGRPEKMDD…TEYSEIKTSK (83 aa). Positions 518-523 match the ITIM motif motif; sequence LHYASL. Residues 528-537 are compositionally biased toward basic and acidic residues; that stretch reads MKSREPKDQE. Positions 542-547 match the SLAM-like motif motif; sequence TEYSEI.

The protein belongs to the immunoglobulin superfamily. SIGLEC (sialic acid binding Ig-like lectin) family. As to expression, expressed by monocytic/myeloid lineage cells. Found at high levels in peripheral blood leukocytes, spleen, bone marrow and at lower levels in lymph node, lung, appendix, placenta, pancreas and thymus. Expressed by monocytes and neutrophils but absent from leukemic cell lines representing early stages of myelomonocytic differentiation.

It is found in the membrane. Its function is as follows. Putative adhesion molecule that mediates sialic-acid dependent binding to cells. Binds equally to alpha-2,3-linked and alpha-2,6-linked sialic acid. The sialic acid recognition site may be masked by cis interactions with sialic acids on the same cell surface. The protein is Sialic acid-binding Ig-like lectin 5 (SIGLEC5) of Homo sapiens (Human).